The following is a 212-amino-acid chain: Large ribosomal subunit protein uL3 (212 aa).

The segment at 133-152 (RGSMGHGSKYHRRPGSLGAK) is disordered.

Belongs to the universal ribosomal protein uL3 family. In terms of assembly, part of the 50S ribosomal subunit. Forms a cluster with proteins L14 and L19.

Its function is as follows. One of the primary rRNA binding proteins, it binds directly near the 3'-end of the 23S rRNA, where it nucleates assembly of the 50S subunit. This is Large ribosomal subunit protein uL3 from Syntrophomonas wolfei subsp. wolfei (strain DSM 2245B / Goettingen).